The following is a 161-amino-acid chain: Endoribonuclease YbeY (161 aa).

3 residues coordinate Zn(2+): His-127, His-131, and His-137.

The protein belongs to the endoribonuclease YbeY family. Requires Zn(2+) as cofactor.

Its subcellular location is the cytoplasm. In terms of biological role, single strand-specific metallo-endoribonuclease involved in late-stage 70S ribosome quality control and in maturation of the 3' terminus of the 16S rRNA. The protein is Endoribonuclease YbeY of Listeria monocytogenes serotype 4a (strain HCC23).